The sequence spans 363 residues: NAD(P)H-quinone oxidoreductase subunit 1, chloroplastic (363 aa).

The next 7 membrane-spanning stretches (helical) occupy residues 26 to 46 (IIWI…GVLV), 98 to 118 (FSIG…VIPF), 127 to 147 (LTIG…GLLM), 246 to 266 (TEYS…NLLV), 268 to 288 (SLFV…YIFV), 300 to 320 (VFGP…FLFI), and 336 to 356 (LLNL…LLTT).

The protein belongs to the complex I subunit 1 family. NDH is composed of at least 16 different subunits, 5 of which are encoded in the nucleus.

Its subcellular location is the plastid. It is found in the chloroplast thylakoid membrane. The catalysed reaction is a plastoquinone + NADH + (n+1) H(+)(in) = a plastoquinol + NAD(+) + n H(+)(out). It catalyses the reaction a plastoquinone + NADPH + (n+1) H(+)(in) = a plastoquinol + NADP(+) + n H(+)(out). Functionally, NDH shuttles electrons from NAD(P)H:plastoquinone, via FMN and iron-sulfur (Fe-S) centers, to quinones in the photosynthetic chain and possibly in a chloroplast respiratory chain. The immediate electron acceptor for the enzyme in this species is believed to be plastoquinone. Couples the redox reaction to proton translocation, and thus conserves the redox energy in a proton gradient. This chain is NAD(P)H-quinone oxidoreductase subunit 1, chloroplastic, found in Coffea arabica (Arabian coffee).